The sequence spans 285 residues: MKQRLIIYAQLMRLDRPVGIFLLLWPTLWALWIAGAGQPDPKVLLVFVAGVALMRSAGCVINDFADRAFDPHVKRTINRPLATGKASSQEALLLFAGLCLVAFGLVLLLNPLTIGLSFAGALLAATYPFMKRYTHWPQAYLGAAFGWAVPMAFAAQTGTVPIAAWLLFIATVLWATVYDTFYGMVDREDDLLIGVKSTAILFGEGDRLVTALLQGALLLLLFWIGYREGLGFYYYLGLAIAAGFAGYQQYLLRSREPAQYFRAFLNNNAFGAVIFGGIALHYLTA.

Transmembrane regions (helical) follow at residues 17–37, 41–61, 92–112, 135–155, 158–178, 216–236, and 263–283; these read PVGIFLLLWPTLWALWIAGAG, PKVLLVFVAGVALMRSAGCVI, LLLFAGLCLVAFGLVLLLNPL, HWPQAYLGAAFGWAVPMAFAA, GTVPIAAWLLFIATVLWATVY, ALLLLLFWIGYREGLGFYYYL, and AFLNNNAFGAVIFGGIALHYL.

It belongs to the UbiA prenyltransferase family. Mg(2+) serves as cofactor.

The protein localises to the cell inner membrane. It carries out the reaction all-trans-octaprenyl diphosphate + 4-hydroxybenzoate = 4-hydroxy-3-(all-trans-octaprenyl)benzoate + diphosphate. It participates in cofactor biosynthesis; ubiquinone biosynthesis. Catalyzes the prenylation of para-hydroxybenzoate (PHB) with an all-trans polyprenyl group. Mediates the second step in the final reaction sequence of ubiquinone-8 (UQ-8) biosynthesis, which is the condensation of the polyisoprenoid side chain with PHB, generating the first membrane-bound Q intermediate 3-octaprenyl-4-hydroxybenzoate. The sequence is that of 4-hydroxybenzoate octaprenyltransferase from Nitrosococcus oceani (strain ATCC 19707 / BCRC 17464 / JCM 30415 / NCIMB 11848 / C-107).